Reading from the N-terminus, the 2002-residue chain is Methylcytosine dioxygenase TET2 (2002 aa).

The segment covering 1-11 (MEQDRTNHVEG) has biased composition (basic and acidic residues). A disordered region spans residues 1-22 (MEQDRTNHVEGNRLSPFLIPSP). Phosphoserine is present on residues S15, S75, and S99. The segment covering 113-124 (KQDQKANGERRN) has biased composition (basic and acidic residues). Disordered regions lie at residues 113 to 154 (KQDQ…VSSV), 266 to 287 (HPSH…LPPK), 349 to 368 (GEEF…GSSE), 390 to 488 (DSFS…VNRN), 703 to 748 (LNQQ…QQKL), 930 to 949 (VPDQ…TQKH), and 1075 to 1095 (DSHT…PTKR). 2 stretches are compositionally biased toward polar residues: residues 126–143 (GVSQ…NVSD) and 267–283 (PSHT…SNSE). A compositionally biased stretch (pro residues) spans 397–416 (TPPPPSQLLLSPPPPLPQVP). Polar residues-rich tracts occupy residues 479-488 (RPQNNCVNRN) and 703-718 (LNQQ…NSHL). Residues 731–748 (QPSQSSHLPQNQQQQQKL) show a composition bias toward low complexity. Composition is skewed to polar residues over residues 935–944 (GSHTQTPPQK) and 1081–1095 (LEQQ…PTKR). Residues S1107 and S1109 each carry the phosphoserine modification. Residues C1133, C1135, C1193, H1219, and C1221 each coordinate Zn(2+). Residue R1261 participates in 2-oxoglutarate binding. Zn(2+) contacts are provided by C1271, C1273, C1289, and C1298. The segment at 1290–1303 (SWSMYYNGCKFARS) is interaction with DNA. A Glycyl lysine isopeptide (Lys-Gly) (interchain with G-Cter in ubiquitin) cross-link involves residue K1299. Residue C1358 coordinates Zn(2+). Residue C1374 coordinates 2-oxoglutarate. H1380 contributes to the Zn(2+) binding site. Fe cation contacts are provided by H1382 and D1384. Substrate is bound at residue N1387. H1416 serves as a coordination point for 2-oxoglutarate. Disordered stretches follow at residues 1475–1507 (AAEK…NASQ) and 1521–1587 (VMQQ…HTSD). Over residues 1477-1487 (EKLSSLENSSN) the composition is skewed to low complexity. Residues 1496 to 1507 (PSRTKQTENASQ) are compositionally biased toward polar residues. Low complexity-rich tracts occupy residues 1523-1532 (QQSQQPQPLQ) and 1539-1551 (QQQQ…QPHH). Polar residues predominate over residues 1554 to 1568 (TESVNSYSASGSTNP). R1682 bears the Asymmetric dimethylarginine mark. Position 1881 (H1881) interacts with Fe cation. Position 1896–1898 (1896–1898 (RIS)) interacts with 2-oxoglutarate. 1902-1904 (YQH) lines the substrate pocket. H1912 lines the Zn(2+) pocket. A disordered region spans residues 1932–1961 (CEKYGPDYVPQKSHGKKVKREPAEPHETSE). The segment covering 1951–1960 (REPAEPHETS) has biased composition (basic and acidic residues).

Belongs to the TET family. In terms of assembly, interacts with HCFC1. Interacts with OGT. Interacts with PROSER1; this interaction mediates TET2 O-GlcNAcylation and stability by promoting the interaction between OGT and TET2. Directly interacts (via C-terminus) with the DCAF1 component of the CRL4(VprBP) E3 ubiquitin-protein ligase complex. Requires Fe(2+) as cofactor. It depends on Zn(2+) as a cofactor. In terms of processing, may be glycosylated. It is unclear whether interaction with OGT leads to GlcNAcylation. According to a report, it is not GlcNAcylated by OGT. In contrast, another group reports GlcNAcylation by OGT in mouse ortholog. Post-translationally, monoubiquitinated at Lys-1299 by the DCX (DDB1-CUL4-X-box) E3 ubiquitin-protein ligase complex called CRL4(VprBP) or CUL4A-RBX1-DDB1-DCAF1/VPRBP complex; this modification promotes binding to DNA. Acetylated. Deacetylase HDAC6 acts as a valine sensor by binding to valine through its primate-specific SE14 repeat region and deacetylates TET2 following valine deprivation which promotes TET2-dependent DNA demethylation. As to expression, broadly expressed. Highly expressed in hematopoietic cells; highest expression observed in granulocytes. Expression is reduced in granulocytes from peripheral blood of patients affected by myelodysplastic syndromes.

It is found in the nucleus. Its subcellular location is the chromosome. The enzyme catalyses a 5-methyl-2'-deoxycytidine in DNA + 2-oxoglutarate + O2 = a 5-hydroxymethyl-2'-deoxycytidine in DNA + succinate + CO2. It carries out the reaction a 5-hydroxymethyl-2'-deoxycytidine in DNA + 2-oxoglutarate + O2 = a 5-formyl-2'-deoxycytidine in DNA + succinate + CO2 + H2O. The catalysed reaction is a 5-formyl-2'-deoxycytidine in DNA + 2-oxoglutarate + O2 = a 5-carboxyl-2'-deoxycytidine in DNA + succinate + CO2 + H(+). Dioxygenase that catalyzes the conversion of the modified genomic base 5-methylcytosine (5mC) into 5-hydroxymethylcytosine (5hmC) and plays a key role in active DNA demethylation. Has a preference for 5-hydroxymethylcytosine in CpG motifs. Also mediates subsequent conversion of 5hmC into 5-formylcytosine (5fC), and conversion of 5fC to 5-carboxylcytosine (5caC). Conversion of 5mC into 5hmC, 5fC and 5caC probably constitutes the first step in cytosine demethylation. Methylation at the C5 position of cytosine bases is an epigenetic modification of the mammalian genome which plays an important role in transcriptional regulation. In addition to its role in DNA demethylation, also involved in the recruitment of the O-GlcNAc transferase OGT to CpG-rich transcription start sites of active genes, thereby promoting histone H2B GlcNAcylation by OGT. The chain is Methylcytosine dioxygenase TET2 (TET2) from Homo sapiens (Human).